A 142-amino-acid chain; its full sequence is FAD synthase (142 aa).

ATP-binding positions include 9-10 (TF), 14-17 (HPGH), and Asp92.

This sequence belongs to the archaeal FAD synthase family. Homodimer. Requires a divalent metal cation as cofactor.

The catalysed reaction is FMN + ATP + H(+) = FAD + diphosphate. The protein operates within cofactor biosynthesis; FAD biosynthesis; FAD from FMN: step 1/1. Its function is as follows. Catalyzes the transfer of the AMP portion of ATP to flavin mononucleotide (FMN) to produce flavin adenine dinucleotide (FAD) coenzyme. This is FAD synthase from Haloferax volcanii (strain ATCC 29605 / DSM 3757 / JCM 8879 / NBRC 14742 / NCIMB 2012 / VKM B-1768 / DS2) (Halobacterium volcanii).